The chain runs to 348 residues: 3-isopropylmalate dehydrogenase (348 aa).

76–87 contacts NAD(+); the sequence is GPKWTDPNNRPE. Substrate is bound by residues R94, R104, R132, and D217. Mg(2+) is bound by residues D217, D241, and D245. Position 275–287 (275–287) interacts with NAD(+); sequence GSAPDIAGKNVAN.

Belongs to the isocitrate and isopropylmalate dehydrogenases family. LeuB type 1 subfamily. In terms of assembly, homodimer. Requires Mg(2+) as cofactor. Mn(2+) serves as cofactor.

Its subcellular location is the cytoplasm. It catalyses the reaction (2R,3S)-3-isopropylmalate + NAD(+) = 4-methyl-2-oxopentanoate + CO2 + NADH. It functions in the pathway amino-acid biosynthesis; L-leucine biosynthesis; L-leucine from 3-methyl-2-oxobutanoate: step 3/4. Functionally, catalyzes the oxidation of 3-carboxy-2-hydroxy-4-methylpentanoate (3-isopropylmalate) to 3-carboxy-4-methyl-2-oxopentanoate. The product decarboxylates to 4-methyl-2 oxopentanoate. This Staphylococcus aureus (strain Mu50 / ATCC 700699) protein is 3-isopropylmalate dehydrogenase.